Consider the following 339-residue polypeptide: MRVYYDRDADLNLIKGKKVVIVGYGSQGHAHALNLKDSGVKEIAIALRKGSASAKKAEGAGFKVMEVAEAAKWGDLVMMLTPDELQGDIYREHLHDNMKKGAALIFAHGLNVHFNLLDPRADLDVLMIAPKGPGHTVRAEYQRGGGVPCLIAVAKDSSGNAHDLGLSYASAIGGGRAGIIETTFREECETDLFGEQAVLCGGLVELIKNGFETLVEAGYAPEMAYFECLHEVKLIVDLIYEGGIANMNYSISNTAEYGEYVTGPRIVTAETKKEMKRVLDDIQSGKFARDWMLENKVNQTSFKATRARLAAHPIEEVGARLRDMMPWIKKAAMVDKAKN.

In terms of domain architecture, KARI N-terminal Rossmann spans 1-182; that stretch reads MRVYYDRDAD…GGGRAGIIET (182 aa). NADP(+) contacts are provided by residues 24 to 27, arginine 48, serine 51, serine 53, and 83 to 86; these read YGSQ and DELQ. Histidine 108 is an active-site residue. Residue glycine 134 participates in NADP(+) binding. The 146-residue stretch at 183–328 folds into the KARI C-terminal knotted domain; sequence TFREECETDL…ARLRDMMPWI (146 aa). Mg(2+) is bound by residues aspartate 191, glutamate 195, glutamate 227, and glutamate 231. Residue serine 252 coordinates substrate.

The protein belongs to the ketol-acid reductoisomerase family. Mg(2+) serves as cofactor.

It carries out the reaction (2R)-2,3-dihydroxy-3-methylbutanoate + NADP(+) = (2S)-2-acetolactate + NADPH + H(+). The enzyme catalyses (2R,3R)-2,3-dihydroxy-3-methylpentanoate + NADP(+) = (S)-2-ethyl-2-hydroxy-3-oxobutanoate + NADPH + H(+). It participates in amino-acid biosynthesis; L-isoleucine biosynthesis; L-isoleucine from 2-oxobutanoate: step 2/4. The protein operates within amino-acid biosynthesis; L-valine biosynthesis; L-valine from pyruvate: step 2/4. Its function is as follows. Involved in the biosynthesis of branched-chain amino acids (BCAA). Catalyzes an alkyl-migration followed by a ketol-acid reduction of (S)-2-acetolactate (S2AL) to yield (R)-2,3-dihydroxy-isovalerate. In the isomerase reaction, S2AL is rearranged via a Mg-dependent methyl migration to produce 3-hydroxy-3-methyl-2-ketobutyrate (HMKB). In the reductase reaction, this 2-ketoacid undergoes a metal-dependent reduction by NADPH to yield (R)-2,3-dihydroxy-isovalerate. This chain is Ketol-acid reductoisomerase (NADP(+)), found in Nitrobacter winogradskyi (strain ATCC 25391 / DSM 10237 / CIP 104748 / NCIMB 11846 / Nb-255).